We begin with the raw amino-acid sequence, 1969 residues long: Hybrid signal transduction histidine kinase B (1969 aa).

Polar residues predominate over residues 1-10 (MEKSEQTNSF). Disordered stretches follow at residues 1 to 91 (MEKS…HETK), 218 to 335 (KINE…KTKQ), 412 to 436 (QQQQ…SSDK), 468 to 505 (NNIN…KNKL), and 551 to 598 (GSGG…YNNN). Residues 11 to 55 (ESSNNNNNNIDSNINNNLENNNNKNNNNNNNNNNNNNNNNNNIEN) show a composition bias toward low complexity. A compositionally biased stretch (basic and acidic residues) spans 56 to 65 (SIDKNNKEDN). Basic residues predominate over residues 72–86 (SHRKHRTRLKSKKGN). A compositionally biased stretch (polar residues) spans 242 to 252 (TNSSILKSSEQ). A compositionally biased stretch (low complexity) spans 280–292 (SSSSDEGSDNSKS). The span at 293-304 (QHSSVNTPTLSR) shows a compositional bias: polar residues. Positions 313–335 (SQQSQKQSQQQSQQPQQQNKTKQ) are enriched in low complexity. A compositionally biased stretch (basic residues) spans 416–425 (QHHRHYHHHI). Residues 469 to 492 (NINIQAPSTPVQSRNYPLFTTQSP) are compositionally biased toward polar residues. Gly residues predominate over residues 551-571 (GSGGGGSGGGGGGGGGGGGIG). Residues 574–598 (SSFLDDNNNLNNGENFKNSNSYNNN) show a composition bias toward low complexity. Helical transmembrane passes span 660 to 680 (AYIL…STIL), 684 to 704 (EWFI…LGKI), 708 to 728 (MYLI…TSII), 747 to 767 (LVMI…VILI), and 795 to 815 (FGEL…YTIL). Positions 967–1188 (TVSHELRTPI…TFSFTIPCGI (222 aa)) constitute a Histidine kinase domain. H970 is subject to Phosphohistidine; by autocatalysis. 4 disordered regions span residues 1359–1415 (ASKD…HQLI), 1521–1563 (GIAL…TTQS), 1617–1709 (NNNF…SSHS), and 1755–1832 (QKPQ…TAAA). Positions 1373-1398 (GDGGRSLSGGGGGVGSNGNGNGGGGL) are enriched in gly residues. Composition is skewed to low complexity over residues 1399-1410 (DSNISPSELSSS) and 1527-1549 (SSSK…SPNS). Composition is skewed to polar residues over residues 1554–1563 (ELGNGKTTQS) and 1626–1665 (KPST…SPHR). 2 stretches are compositionally biased toward low complexity: residues 1755–1774 (QKPQ…TSTQ) and 1781–1821 (KTTT…TTTT). Residues 1840–1967 (KILLVEDNFV…DILIQMIKKH (128 aa)) enclose the Response regulatory domain. The residue at position 1889 (D1889) is a 4-aspartylphosphate.

The protein localises to the membrane. It catalyses the reaction ATP + protein L-histidine = ADP + protein N-phospho-L-histidine.. Its function is as follows. Acts in the cytokinin signal transduction pathway that regulates spore germination. Required for the maintenance of spore dormancy. Does not appear to act as a cytokinin receptor. Probably undergoes ATP-dependent autophosphorylation at a conserved histidine residue in the kinase core, which is followed by transfer of the phosphoryl group to a conserved aspartate residue in the receiver domain. The polypeptide is Hybrid signal transduction histidine kinase B (dhkB) (Dictyostelium discoideum (Social amoeba)).